Reading from the N-terminus, the 311-residue chain is Large ribosomal subunit protein uL22 (311 aa).

It belongs to the universal ribosomal protein uL22 family. Part of the 50S ribosomal subunit.

Its function is as follows. This protein binds specifically to 23S rRNA; its binding is stimulated by other ribosomal proteins, e.g. L4, L17, and L20. It is important during the early stages of 50S assembly. It makes multiple contacts with different domains of the 23S rRNA in the assembled 50S subunit and ribosome. The globular domain of the protein is located near the polypeptide exit tunnel on the outside of the subunit, while an extended beta-hairpin is found that lines the wall of the exit tunnel in the center of the 70S ribosome. This is Large ribosomal subunit protein uL22 (rplV) from Ureaplasma parvum serovar 3 (strain ATCC 27815 / 27 / NCTC 11736).